The following is a 555-amino-acid chain: Dihydroxy-acid dehydratase (555 aa).

Asp-78 contributes to the Mg(2+) binding site. Cys-119 is a binding site for [2Fe-2S] cluster. Mg(2+)-binding residues include Asp-120 and Lys-121. At Lys-121 the chain carries N6-carboxylysine. Cys-191 lines the [2Fe-2S] cluster pocket. Mg(2+) is bound at residue Glu-444. Ser-470 serves as the catalytic Proton acceptor.

It belongs to the IlvD/Edd family. As to quaternary structure, homodimer. Requires [2Fe-2S] cluster as cofactor. The cofactor is Mg(2+).

The enzyme catalyses (2R)-2,3-dihydroxy-3-methylbutanoate = 3-methyl-2-oxobutanoate + H2O. It catalyses the reaction (2R,3R)-2,3-dihydroxy-3-methylpentanoate = (S)-3-methyl-2-oxopentanoate + H2O. Its pathway is amino-acid biosynthesis; L-isoleucine biosynthesis; L-isoleucine from 2-oxobutanoate: step 3/4. It participates in amino-acid biosynthesis; L-valine biosynthesis; L-valine from pyruvate: step 3/4. Functions in the biosynthesis of branched-chain amino acids. Catalyzes the dehydration of (2R,3R)-2,3-dihydroxy-3-methylpentanoate (2,3-dihydroxy-3-methylvalerate) into 2-oxo-3-methylpentanoate (2-oxo-3-methylvalerate) and of (2R)-2,3-dihydroxy-3-methylbutanoate (2,3-dihydroxyisovalerate) into 2-oxo-3-methylbutanoate (2-oxoisovalerate), the penultimate precursor to L-isoleucine and L-valine, respectively. In Maridesulfovibrio salexigens (strain ATCC 14822 / DSM 2638 / NCIMB 8403 / VKM B-1763) (Desulfovibrio salexigens), this protein is Dihydroxy-acid dehydratase.